The primary structure comprises 119 residues: Large ribosomal subunit protein uL24 (119 aa).

It belongs to the universal ribosomal protein uL24 family. As to quaternary structure, part of the 50S ribosomal subunit.

Its function is as follows. One of two assembly initiator proteins, it binds directly to the 5'-end of the 23S rRNA, where it nucleates assembly of the 50S subunit. In terms of biological role, located at the polypeptide exit tunnel on the outside of the subunit. The protein is Large ribosomal subunit protein uL24 of Methanosarcina acetivorans (strain ATCC 35395 / DSM 2834 / JCM 12185 / C2A).